The chain runs to 1058 residues: Vacuolar protein sorting-associated protein 54 (1058 aa).

A coiled-coil region spans residues 369–389 (SKKIVEVHERYEQKKKLLAKL).

The protein belongs to the VPS54 family. In terms of assembly, component of the Golgi-associated retrograde protein (GARP) complex, also called VFT (VPS fifty-three) complex, composed of vps-51, vps-52, vps-53 and vps-54. Within the complex interacts with vps-52 and vps-53.

The protein resides in the golgi apparatus. Its subcellular location is the trans-Golgi network. In terms of biological role, acts as a component of the GARP complex that is involved in retrograde transport from early and late endosomes to the trans-Golgi network (TGN). The GARP complex facilitates tethering as well as SNARE complex assembly at the Golgi. This chain is Vacuolar protein sorting-associated protein 54, found in Caenorhabditis elegans.